Consider the following 350-residue polypeptide: Protein RecA (350 aa).

Residue 65 to 72 (GPESSGKT) coordinates ATP. The segment at 326-350 (HNLKTRNTADSKVTGAKDEKSKEEK) is disordered. The span at 340–350 (GAKDEKSKEEK) shows a compositional bias: basic and acidic residues.

The protein belongs to the RecA family.

The protein localises to the cytoplasm. Can catalyze the hydrolysis of ATP in the presence of single-stranded DNA, the ATP-dependent uptake of single-stranded DNA by duplex DNA, and the ATP-dependent hybridization of homologous single-stranded DNAs. It interacts with LexA causing its activation and leading to its autocatalytic cleavage. The sequence is that of Protein RecA from Clostridium novyi (strain NT).